Consider the following 487-residue polypeptide: Chromosomal replication initiator protein DnaA (487 aa).

The domain I, interacts with DnaA modulators stretch occupies residues 1 to 92; the sequence is MTIKGGVVSQ…SELWTANDAT (92 aa). Residues 92-144 form a domain II region; the sequence is TGRRLDLKSRLEFESVGGAGYEAKAEPIEIVLPVSSDVPALAPTNGSKPSPVQ. The domain III, AAA+ region stretch occupies residues 145–367; the sequence is GLQERFTFDT…GALNTLSARA (223 aa). 4 residues coordinate ATP: glycine 189, glycine 191, lysine 192, and threonine 193. The segment at 368 to 487 is domain IV, binds dsDNA; it reads GEGVSRLTLE…LETITRKLRG (120 aa).

This sequence belongs to the DnaA family. Oligomerizes as a right-handed, spiral filament on DNA at oriC.

It is found in the cytoplasm. Plays an essential role in the initiation and regulation of chromosomal replication. ATP-DnaA binds to the origin of replication (oriC) to initiate formation of the DNA replication initiation complex once per cell cycle. Binds the DnaA box (a 9 base pair repeat at the origin) and separates the double-stranded (ds)DNA. Forms a right-handed helical filament on oriC DNA; dsDNA binds to the exterior of the filament while single-stranded (ss)DNA is stabiized in the filament's interior. The ATP-DnaA-oriC complex binds and stabilizes one strand of the AT-rich DNA unwinding element (DUE), permitting loading of DNA polymerase. After initiation quickly degrades to an ADP-DnaA complex that is not apt for DNA replication. Binds acidic phospholipids. The sequence is that of Chromosomal replication initiator protein DnaA from Caulobacter sp. (strain K31).